The chain runs to 460 residues: Argininosuccinate lyase (460 aa).

The protein belongs to the lyase 1 family. Argininosuccinate lyase subfamily.

The protein resides in the cytoplasm. The enzyme catalyses 2-(N(omega)-L-arginino)succinate = fumarate + L-arginine. Its pathway is amino-acid biosynthesis; L-arginine biosynthesis; L-arginine from L-ornithine and carbamoyl phosphate: step 3/3. The polypeptide is Argininosuccinate lyase (Solibacter usitatus (strain Ellin6076)).